Consider the following 394-residue polypeptide: GTPase Era, mitochondrial (394 aa).

In terms of domain architecture, Era-type G spans 32-280 (KCLQLAVIGA…RDHLMSISPQ (249 aa)). Residues 40–47 (GAPNVGKS) form a G1 region. GTP is bound at residue 40-47 (GAPNVGKS). Residues 66–70 (DTTTR) form a G2 region. Residues 87 to 90 (DSPG) are G3. GTP-binding positions include 87–91 (DSPGA) and 160–163 (NKID). The interval 160 to 163 (NKID) is G4. Residues 259–261 (VSS) form a G5 region.

The protein belongs to the TRAFAC class TrmE-Era-EngA-EngB-Septin-like GTPase superfamily. Era GTPase family.

The protein localises to the mitochondrion matrix. It is found in the mitochondrion inner membrane. Its function is as follows. Probable GTPase that plays a role in the mitochondrial ribosomal small subunit assembly. Specifically binds the 12S mitochondrial rRNA (12S mt-rRNA) to a 33 nucleotide section delineating the 3' terminal stem-loop region. May act as a chaperone that protects the 12S mt-rRNA on the 28S mitoribosomal subunit during ribosomal small subunit assembly. May play a role in positively regulating mitochondrial function. Plays a role in fertility. The chain is GTPase Era, mitochondrial from Caenorhabditis elegans.